Here is a 138-residue protein sequence, read N- to C-terminus: Acidic phospholipase A2 inhibitor vaspin A chain (138 aa).

The first 16 residues, 1-16 (MRTLWIVAVCLIGVEG), serve as a signal peptide directing secretion. Cystine bridges form between Cys42–Cys131, Cys44–Cys60, Cys59–Cys111, Cys65–Cys138, Cys66–Cys104, Cys73–Cys97, and Cys91–Cys102.

It belongs to the phospholipase A2 family. Group II subfamily. D49 sub-subfamily. In terms of assembly, heterodimer of a toxic basic protein having phospholipase A2 activity (B chain (AC Q8JFG0)) and a non-toxic acidic protein functioning as its inhibitor (A chain). In terms of tissue distribution, expressed by the venom gland.

Its subcellular location is the secreted. In terms of biological role, heterodimer: postsynaptic neurotoxin. Monomer: the acidic chain inhibits the basic phospholipase A2 of the complex. In Vipera aspis aspis (Aspic viper), this protein is Acidic phospholipase A2 inhibitor vaspin A chain.